Consider the following 432-residue polypeptide: Glial fibrillary acidic protein (432 aa).

The segment at 1–72 (MERRRITSAA…KETRASERAE (72 aa)) is head. Phosphothreonine; by AURKB and ROCK1 is present on Thr-7. An Omega-N-methylarginine modification is found at Arg-12. A Phosphoserine; by AURKB and ROCK1 modification is found at Ser-13. A citrulline mark is found at Arg-30 and Arg-36. Phosphoserine; by AURKB and ROCK1 is present on Ser-38. Residues 69-377 (ERAEMMELND…KLLEGEENRI (309 aa)) form the IF rod domain. The tract at residues 73–104 (MMELNDRFASYIEKVRFLEQQNKALAAELNQL) is coil 1A. Position 82 is a phosphoserine (Ser-82). Positions 105-115 (RAKEPTKLADV) are linker 1. Thr-110 and Thr-150 each carry phosphothreonine. A coil 1B region spans residues 116 to 214 (YQAELRELRL…EEEVRELQEQ (99 aa)). The interval 215-230 (LARQQVHVELDMAKPD) is linker 12. The segment at 231 to 252 (LTAALKEIRTQYEAMASSNMHE) is coil 2A. Residues 253–256 (AEEW) form a linker 2 region. Residues 257–377 (YRSKFADLTD…KLLEGEENRI (121 aa)) form a coil 2B region. Arg-270 carries the post-translational modification Citrulline. Ser-323 is modified (phosphoserine). The tail stretch occupies residues 378 to 432 (TIPVQTFSNLQIRETSLDTKSVSEGHLKRNIVVKTVEMRDGEVIKESKQEHKDVM). The residue at position 383 (Thr-383) is a Phosphothreonine. A Phosphoserine modification is found at Ser-385. Residues Arg-406 and Arg-416 each carry the citrulline modification.

Belongs to the intermediate filament family. In terms of assembly, interacts with SYNM. Post-translationally, phosphorylated by PKN1.

The protein resides in the cytoplasm. Functionally, GFAP, a class-III intermediate filament, is a cell-specific marker that, during the development of the central nervous system, distinguishes astrocytes from other glial cells. This is Glial fibrillary acidic protein (GFAP) from Pongo abelii (Sumatran orangutan).